Here is a 230-residue protein sequence, read N- to C-terminus: UPF0173 metal-dependent hydrolase RHOS4_08540 (230 aa).

It belongs to the UPF0173 family.

The sequence is that of UPF0173 metal-dependent hydrolase RHOS4_08540 from Cereibacter sphaeroides (strain ATCC 17023 / DSM 158 / JCM 6121 / CCUG 31486 / LMG 2827 / NBRC 12203 / NCIMB 8253 / ATH 2.4.1.) (Rhodobacter sphaeroides).